A 367-amino-acid polypeptide reads, in one-letter code: Tubulin-like protein CetZ (367 aa).

Residues 11 to 15, S111, 115 to 117, E148, N176, and N194 each bind GTP; these read QCGNR and GTG.

This sequence belongs to the CetZ family.

The protein resides in the cytoplasm. Involved in cell shape control. The polypeptide is Tubulin-like protein CetZ (Methanothrix thermoacetophila (strain DSM 6194 / JCM 14653 / NBRC 101360 / PT) (Methanosaeta thermophila)).